The chain runs to 319 residues: Cobalamin biosynthesis protein CobD (319 aa).

4 helical membrane passes run 56-76 (GLWI…LWLM), 153-173 (VDGV…LAMA), 204-224 (LANW…AWFI), and 290-310 (IPLS…LFAL).

Belongs to the CobD/CbiB family.

Its subcellular location is the cell membrane. Its pathway is cofactor biosynthesis; adenosylcobalamin biosynthesis. Converts cobyric acid to cobinamide by the addition of aminopropanol on the F carboxylic group. This is Cobalamin biosynthesis protein CobD from Photorhabdus laumondii subsp. laumondii (strain DSM 15139 / CIP 105565 / TT01) (Photorhabdus luminescens subsp. laumondii).